The chain runs to 525 residues: GMP synthase [glutamine-hydrolyzing] (525 aa).

Positions 9–207 (RILILDFGSQ…VLDICGCEAL (199 aa)) constitute a Glutamine amidotransferase type-1 domain. Cysteine 86 serves as the catalytic Nucleophile. Active-site residues include histidine 181 and glutamate 183. Residues 208-400 (WTPSKIAEDA…LGLPYDMVYR (193 aa)) enclose the GMPS ATP-PPase domain. 235 to 241 (SGGVDSS) lines the ATP pocket.

In terms of assembly, homodimer.

It carries out the reaction XMP + L-glutamine + ATP + H2O = GMP + L-glutamate + AMP + diphosphate + 2 H(+). Its pathway is purine metabolism; GMP biosynthesis; GMP from XMP (L-Gln route): step 1/1. Its function is as follows. Catalyzes the synthesis of GMP from XMP. The chain is GMP synthase [glutamine-hydrolyzing] from Pseudomonas fluorescens (strain Pf0-1).